Consider the following 72-residue polypeptide: Small ribosomal subunit protein bS18 (72 aa).

Belongs to the bacterial ribosomal protein bS18 family. In terms of assembly, part of the 30S ribosomal subunit. Forms a tight heterodimer with protein bS6.

In terms of biological role, binds as a heterodimer with protein bS6 to the central domain of the 16S rRNA, where it helps stabilize the platform of the 30S subunit. In Francisella philomiragia subsp. philomiragia (strain ATCC 25017 / CCUG 19701 / FSC 153 / O#319-036), this protein is Small ribosomal subunit protein bS18.